We begin with the raw amino-acid sequence, 62 residues long: MFTLKKSLLLLLFLGTINLSLSEQERNAEEERRDDPEEMDAEVEKRAILTTLANWARKFLGK.

Positions M1–S22 are cleaved as a signal peptide. The propeptide occupies E23–E44. L60 bears the Leucine amide mark.

Expressed by the skin glands.

Its subcellular location is the secreted. Has antimicrobial activity against some Gram-positive bacteria and fungi but has no activity against a range of Gram-negative bacteria except P.faecalis. Active against the Gram-positive bacteria S.aureus ATCC 25923 (MIC=37.5 uM), S.carnosus KHS (MIC=37.5 uM), B.licheniformis X39 (MIC=19 uM), R.rhodochrous X15 (MIC=4.8 uM), is virtually inactive against E.faecalis 981 (MIC=150 uM) and inactive against E.faecium 091299. Has some antimicrobial activity against the Gram-negative bacterium P.faecalis X29 (MIC=75 uM) and is inactive against E.coli, P.aeruginosa and S.typhi. Has antifungal activity against C.albicans ATCC 2002 (MIC=19 uM) and lower activity against the slime mold 090223 (MIC=75 uM). Has low hemolytic activity against human erythrocytes (LC(50)=75 uM). This chain is Temporin-HN1, found in Odorrana hainanensis (Odor frog).